We begin with the raw amino-acid sequence, 362 residues long: Sulfate/thiosulfate import ATP-binding protein CysA (362 aa).

In terms of domain architecture, ABC transporter spans 13 to 243; sequence ITVRDAYKRY…PTNAFVMSFL (231 aa). 45 to 52 contacts ATP; sequence GPSGSGKS.

The protein belongs to the ABC transporter superfamily. Sulfate/tungstate importer (TC 3.A.1.6) family. In terms of assembly, the complex is composed of two ATP-binding proteins (CysA), two transmembrane proteins (CysT and CysW) and a solute-binding protein (CysP).

It is found in the cell membrane. It catalyses the reaction sulfate(out) + ATP + H2O = sulfate(in) + ADP + phosphate + H(+). It carries out the reaction thiosulfate(out) + ATP + H2O = thiosulfate(in) + ADP + phosphate + H(+). Its function is as follows. Part of the ABC transporter complex CysAWTP involved in sulfate/thiosulfate import. Responsible for energy coupling to the transport system. This chain is Sulfate/thiosulfate import ATP-binding protein CysA, found in Mycolicibacterium paratuberculosis (strain ATCC BAA-968 / K-10) (Mycobacterium paratuberculosis).